The chain runs to 206 residues: Ribosomal RNA large subunit methyltransferase E (206 aa).

S-adenosyl-L-methionine-binding residues include G60, W62, D80, D96, and D121. K161 acts as the Proton acceptor in catalysis.

Belongs to the class I-like SAM-binding methyltransferase superfamily. RNA methyltransferase RlmE family.

It localises to the cytoplasm. It catalyses the reaction uridine(2552) in 23S rRNA + S-adenosyl-L-methionine = 2'-O-methyluridine(2552) in 23S rRNA + S-adenosyl-L-homocysteine + H(+). In terms of biological role, specifically methylates the uridine in position 2552 of 23S rRNA at the 2'-O position of the ribose in the fully assembled 50S ribosomal subunit. The protein is Ribosomal RNA large subunit methyltransferase E of Hahella chejuensis (strain KCTC 2396).